The chain runs to 200 residues: 3-isopropylmalate dehydratase small subunit (200 aa).

This sequence belongs to the LeuD family. LeuD type 1 subfamily. As to quaternary structure, heterodimer of LeuC and LeuD.

The catalysed reaction is (2R,3S)-3-isopropylmalate = (2S)-2-isopropylmalate. Its pathway is amino-acid biosynthesis; L-leucine biosynthesis; L-leucine from 3-methyl-2-oxobutanoate: step 2/4. Catalyzes the isomerization between 2-isopropylmalate and 3-isopropylmalate, via the formation of 2-isopropylmaleate. This is 3-isopropylmalate dehydratase small subunit from Actinobacillus pleuropneumoniae serotype 3 (strain JL03).